We begin with the raw amino-acid sequence, 182 residues long: U1 small nuclear ribonucleoprotein C (182 aa).

The Matrin-type zinc finger occupies 4–36; sequence YLCDYCQVWLTHDSQSVRKAHNAGRAHIQNVQD. Residues 129–182 are disordered; that stretch reads PQTTASSNTQLTQQQQSLPQTNEHQRARTHSNANNHFTKTHHQGQRSHQRFVRA. Low complexity predominate over residues 130-150; the sequence is QTTASSNTQLTQQQQSLPQTN. A compositionally biased stretch (basic residues) spans 166 to 182; that stretch reads TKTHHQGQRSHQRFVRA.

It belongs to the U1 small nuclear ribonucleoprotein C family. In terms of assembly, U1 snRNP is composed of the 7 core Sm proteins smb1, smd1, smd2, smd3, sme1, smf1 and smg1 (Sm proteins B, D1, D2, D3, E, F and G, respectively) that assemble in a heptameric protein ring on the Sm site of the small nuclear RNA to form the core snRNP, and at least 9 U1 snRNP-specific proteins usp101/U1-70K, usp102/U1-A, usp103/U1-C, usp106/LUC7, usp105/PRP39, usp104/PRP40, usp107/U1-H, usp108/U1-J and usp109/U1-L. usp103/U1-C interacts with U1 snRNA and the 5' splice-site region of the pre-mRNA.

It is found in the nucleus. Component of the spliceosomal U1 snRNP, which is essential for recognition of the pre-mRNA 5' splice-site and the subsequent assembly of the spliceosome. usp103/U1-C is directly involved in initial 5' splice-site recognition for both constitutive and regulated alternative splicing. The interaction with the 5' splice-site seems to precede base-pairing between the pre-mRNA and the U1 snRNA. Stimulates commitment or early (E) complex formation by stabilizing the base pairing of the 5' end of the U1 snRNA and the 5' splice-site region. The protein is U1 small nuclear ribonucleoprotein C (usp103) of Schizosaccharomyces pombe (strain 972 / ATCC 24843) (Fission yeast).